A 491-amino-acid polypeptide reads, in one-letter code: Probable cytosol aminopeptidase (491 aa).

Mn(2+) is bound by residues lysine 263 and aspartate 268. The active site involves lysine 275. Residues aspartate 286, aspartate 345, and glutamate 347 each coordinate Mn(2+). Residue arginine 349 is part of the active site.

This sequence belongs to the peptidase M17 family. Mn(2+) serves as cofactor.

Its subcellular location is the cytoplasm. It carries out the reaction Release of an N-terminal amino acid, Xaa-|-Yaa-, in which Xaa is preferably Leu, but may be other amino acids including Pro although not Arg or Lys, and Yaa may be Pro. Amino acid amides and methyl esters are also readily hydrolyzed, but rates on arylamides are exceedingly low.. It catalyses the reaction Release of an N-terminal amino acid, preferentially leucine, but not glutamic or aspartic acids.. Presumably involved in the processing and regular turnover of intracellular proteins. Catalyzes the removal of unsubstituted N-terminal amino acids from various peptides. This chain is Probable cytosol aminopeptidase, found in Haemophilus influenzae (strain PittGG).